Consider the following 364-residue polypeptide: Carbamoyl phosphate synthase pyrimidine-specific small chain (364 aa).

Residues 1–169 are CPSase; sequence MKRYLVLEDG…AYPNPATGPN (169 aa). Residues S45, G217, and G219 each coordinate L-glutamine. The 188-residue stretch at 169-356 folds into the Glutamine amidotransferase type-1 domain; sequence NVVVVDFGLK…IDLMAANQAT (188 aa). Catalysis depends on C244, which acts as the Nucleophile. 5 residues coordinate L-glutamine: L245, Q248, N286, G288, and Y289. Active-site residues include H329 and D331.

The protein belongs to the CarA family. As to quaternary structure, composed of two chains; the small (or glutamine) chain promotes the hydrolysis of glutamine to ammonia, which is used by the large (or ammonia) chain to synthesize carbamoyl phosphate. Tetramer of heterodimers (alpha,beta)4.

It carries out the reaction hydrogencarbonate + L-glutamine + 2 ATP + H2O = carbamoyl phosphate + L-glutamate + 2 ADP + phosphate + 2 H(+). The enzyme catalyses L-glutamine + H2O = L-glutamate + NH4(+). Its pathway is pyrimidine metabolism; UMP biosynthesis via de novo pathway; (S)-dihydroorotate from bicarbonate: step 1/3. Its activity is regulated as follows. Inhibited by pyrimidine. Functionally, small subunit of the glutamine-dependent carbamoyl phosphate synthetase (CPSase). CPSase catalyzes the formation of carbamoyl phosphate from the ammonia moiety of glutamine, carbonate, and phosphate donated by ATP, constituting the first step of the biosynthetic pathway leading to pyrimidine nucleotides. The small subunit (glutamine amidotransferase) binds and cleaves glutamine to supply the large subunit with the substrate ammonia. The polypeptide is Carbamoyl phosphate synthase pyrimidine-specific small chain (Lactiplantibacillus plantarum (strain ATCC BAA-793 / NCIMB 8826 / WCFS1) (Lactobacillus plantarum)).